We begin with the raw amino-acid sequence, 181 residues long: Regulator of G-protein signaling 5 (181 aa).

Positions 64–180 (SLDKLLQNNY…VRSEFYQEFI (117 aa)) constitute an RGS domain.

Its subcellular location is the cytoplasm. The protein localises to the membrane. Inhibits signal transduction by increasing the GTPase activity of G protein alpha subunits thereby driving them into their inactive GDP-bound form. Binds to G(i)-alpha and G(o)-alpha, but not to G(s)-alpha. This chain is Regulator of G-protein signaling 5 (RGS5), found in Sus scrofa (Pig).